A 457-amino-acid polypeptide reads, in one-letter code: tRNA modification GTPase MnmE (457 aa).

Residues Arg-22, Glu-86, and Arg-125 each contribute to the (6S)-5-formyl-5,6,7,8-tetrahydrofolate site. Residues 221–381 (GLRAVLAGRP…LEAEVARVAG (161 aa)) form the TrmE-type G domain. Asn-231 is a K(+) binding site. Residues 231–236 (NVGKSS), 250–256 (TPIPGTT), and 275–278 (DTAG) each bind GTP. A Mg(2+)-binding site is contributed by Ser-235. K(+) is bound by residues Thr-250, Ile-252, and Thr-255. Mg(2+) is bound at residue Thr-256. Lys-457 is a (6S)-5-formyl-5,6,7,8-tetrahydrofolate binding site.

It belongs to the TRAFAC class TrmE-Era-EngA-EngB-Septin-like GTPase superfamily. TrmE GTPase family. In terms of assembly, homodimer. Heterotetramer of two MnmE and two MnmG subunits. It depends on K(+) as a cofactor.

Its subcellular location is the cytoplasm. Its function is as follows. Exhibits a very high intrinsic GTPase hydrolysis rate. Involved in the addition of a carboxymethylaminomethyl (cmnm) group at the wobble position (U34) of certain tRNAs, forming tRNA-cmnm(5)s(2)U34. The polypeptide is tRNA modification GTPase MnmE (Symbiobacterium thermophilum (strain DSM 24528 / JCM 14929 / IAM 14863 / T)).